Here is a 170-residue protein sequence, read N- to C-terminus: F107 fimbrial protein (170 aa).

The first 21 residues, 1–21, serve as a signal peptide directing secretion; sequence MKRLVFISFVALSMTAGSAMA. The cysteines at positions 37 and 78 are disulfide-linked.

This sequence belongs to the fimbrial protein family.

Its subcellular location is the fimbrium. In terms of biological role, fimbriae (also called pili), polar filaments radiating from the surface of the bacterium to a length of 0.5-1.5 micrometers and numbering 100-300 per cell, enable bacteria to colonize the epithelium of specific host organs. This is F107 fimbrial protein (fedA) from Escherichia coli.